We begin with the raw amino-acid sequence, 318 residues long: Ferrochelatase (318 aa).

Histidine 194 and glutamate 275 together coordinate Fe cation.

The protein belongs to the ferrochelatase family.

The protein localises to the cytoplasm. It carries out the reaction heme b + 2 H(+) = protoporphyrin IX + Fe(2+). The protein operates within porphyrin-containing compound metabolism; protoheme biosynthesis; protoheme from protoporphyrin-IX: step 1/1. Functionally, catalyzes the ferrous insertion into protoporphyrin IX. This chain is Ferrochelatase, found in Xanthomonas axonopodis pv. citri (strain 306).